Reading from the N-terminus, the 347-residue chain is Phosphoribosylformylglycinamidine cyclo-ligase (347 aa).

The protein belongs to the AIR synthase family.

The protein localises to the cytoplasm. The catalysed reaction is 2-formamido-N(1)-(5-O-phospho-beta-D-ribosyl)acetamidine + ATP = 5-amino-1-(5-phospho-beta-D-ribosyl)imidazole + ADP + phosphate + H(+). The protein operates within purine metabolism; IMP biosynthesis via de novo pathway; 5-amino-1-(5-phospho-D-ribosyl)imidazole from N(2)-formyl-N(1)-(5-phospho-D-ribosyl)glycinamide: step 2/2. This chain is Phosphoribosylformylglycinamidine cyclo-ligase, found in Prochlorococcus marinus (strain MIT 9312).